The primary structure comprises 155 residues: MKLNELRDCEGATKNRKRIGRGIGSGTGKTGGRGVKGQKSRSGVSLNGFEGGQMPIYRRLPKRGFKNFFSKIYNEVSLGRIQLAVDTGKLNIEKPVDMIALKEAGIIRREKDGVRLLSDGDLKAKITFHVSGASQAARVKVEKVGGQVISPEVVG.

The span at 1–13 shows a compositional bias: basic and acidic residues; sequence MKLNELRDCEGAT. The tract at residues 1 to 47 is disordered; that stretch reads MKLNELRDCEGATKNRKRIGRGIGSGTGKTGGRGVKGQKSRSGVSLN. The span at 21 to 35 shows a compositional bias: gly residues; the sequence is RGIGSGTGKTGGRGV.

The protein belongs to the universal ribosomal protein uL15 family. Part of the 50S ribosomal subunit.

Its function is as follows. Binds to the 23S rRNA. The polypeptide is Large ribosomal subunit protein uL15 (Bartonella tribocorum (strain CIP 105476 / IBS 506)).